Here is an 83-residue protein sequence, read N- to C-terminus: Alpha-toxin CvIV4 (83 aa).

A signal peptide spans 1–19 (MNYFILILVAALLILDVNC). An LCN-type CS-alpha/beta domain is found at 21–79 (KDGYPVEHSGCKYTCWKNEYCDKVCKDLKGEGGYCYINLTCWCTGLPDNVPLKTNQRCN). 4 cysteine pairs are disulfide-bonded: cysteine 31/cysteine 78, cysteine 35/cysteine 55, cysteine 41/cysteine 61, and cysteine 45/cysteine 63.

This sequence belongs to the long (4 C-C) scorpion toxin superfamily. Sodium channel inhibitor family. As to expression, expressed by the venom gland.

It is found in the secreted. In terms of biological role, this toxin significantly slows the fast inactivation of Nav1.2/SCN2A (EC(50)=580 nM), Nav1.3/SCN3A (EC(50)=1310 nM), Nav1.4/SCN4A (EC(50)=530 nM), and Nav1.7/SCN9A (EC(50)=1340 nM). The toxin does not affect the peak amplitude of Nav1.7 currents. On all channels cited above, the toxin requires depolarizing potentials to slow channel inactivation. In addition, the toxin has no or very weak effects on the voltage-dependence of steady-state inactivation, and on voltage-dependence of activation. In vivo, it produces paw licking in mice equivalent to the effects of whole venom. In Centruroides vittatus (Striped bark scorpion), this protein is Alpha-toxin CvIV4.